A 217-amino-acid chain; its full sequence is Peroxiredoxin Q, chloroplastic (217 aa).

The N-terminal 65 residues, 1 to 65 (MAAICLPVAK…PPPSYSARIS (65 aa)), are a transit peptide targeting the chloroplast. One can recognise a Thioredoxin domain in the interval 70 to 217 (VSKGSVPPQF…DETLKFLQSA (148 aa)). Cysteine 112 serves as the catalytic Cysteine sulfenic acid (-SOH) intermediate. The cysteines at positions 112 and 117 are disulfide-linked.

The protein belongs to the peroxiredoxin family. BCP/PrxQ subfamily. Monomer. As to expression, expressed in the leaves, roots and stems.

It localises to the plastid. The protein resides in the chloroplast thylakoid lumen. It catalyses the reaction a hydroperoxide + [thioredoxin]-dithiol = an alcohol + [thioredoxin]-disulfide + H2O. Functionally, thiol-specific peroxidase that catalyzes the reduction of hydrogen peroxide and organic hydroperoxides to water and alcohols, respectively. Plays a role in cell protection against oxidative stress by detoxifying peroxides. Involved in both resistance against fungal disease and oxidative stress. In Gentiana triflora (Clustered gentian), this protein is Peroxiredoxin Q, chloroplastic (AFP1).